A 301-amino-acid chain; its full sequence is D-alanine--D-alanine ligase (301 aa).

The ATP-grasp domain maps to lysine 99–glutamate 293. ATP is bound at residue isoleucine 126–threonine 181. Residues aspartate 248, glutamate 260, and asparagine 262 each coordinate Mg(2+).

This sequence belongs to the D-alanine--D-alanine ligase family. Mg(2+) is required as a cofactor. It depends on Mn(2+) as a cofactor.

It is found in the cytoplasm. The enzyme catalyses 2 D-alanine + ATP = D-alanyl-D-alanine + ADP + phosphate + H(+). Its pathway is cell wall biogenesis; peptidoglycan biosynthesis. Cell wall formation. The polypeptide is D-alanine--D-alanine ligase (Clostridium perfringens (strain SM101 / Type A)).